The sequence spans 374 residues: Carnitine monooxygenase oxygenase subunit (374 aa).

In terms of domain architecture, Rieske spans 47–155 (WICVAHSSEL…LEEYAGFVFI (109 aa)). Residues Cys-89, His-91, Cys-109, and His-112 each contribute to the [2Fe-2S] cluster site. Fe cation contacts are provided by His-211, His-216, and Asp-325.

Belongs to the bacterial ring-hydroxylating dioxygenase alpha subunit family. CntA subfamily. As to quaternary structure, composed of an oxygenase subunit and a reductase subunit. The cofactor is [2Fe-2S] cluster. Fe cation is required as a cofactor.

The catalysed reaction is (R)-carnitine + NADH + O2 + H(+) = (3R)-3-hydroxy-4-oxobutanoate + trimethylamine + NAD(+) + H2O. It carries out the reaction (R)-carnitine + NADPH + O2 + H(+) = (3R)-3-hydroxy-4-oxobutanoate + trimethylamine + NADP(+) + H2O. It participates in amine and polyamine metabolism; carnitine metabolism. In terms of biological role, converts carnitine to trimethylamine and malic semialdehyde. This chain is Carnitine monooxygenase oxygenase subunit (yeaW), found in Escherichia coli O157:H7.